Consider the following 181-residue polypeptide: Protein canopy homolog 1 (181 aa).

The first 21 residues, 1-21, serve as a signal peptide directing secretion; the sequence is MAILLHFGVLITAFLSSHVEG. The region spanning 25–177 is the Saposin B-type domain; that stretch reads PILYCGACRA…EETGLCKEYL (153 aa). 3 cysteine pairs are disulfide-bonded: cysteine 29/cysteine 173, cysteine 32/cysteine 166, and cysteine 87/cysteine 139. The Prevents secretion from ER signature appears at 178-181; sequence HNEL.

The protein belongs to the canopy family.

It localises to the endoplasmic reticulum. Functionally, plays an role in early embryonic development. This Xenopus laevis (African clawed frog) protein is Protein canopy homolog 1 (cnpy1).